The primary structure comprises 306 residues: Homoserine kinase (306 aa).

Residue 90–100 (PLARGLGSSAS) coordinates ATP.

Belongs to the GHMP kinase family. Homoserine kinase subfamily.

Its subcellular location is the cytoplasm. The enzyme catalyses L-homoserine + ATP = O-phospho-L-homoserine + ADP + H(+). It participates in amino-acid biosynthesis; L-threonine biosynthesis; L-threonine from L-aspartate: step 4/5. In terms of biological role, catalyzes the ATP-dependent phosphorylation of L-homoserine to L-homoserine phosphate. The sequence is that of Homoserine kinase from Staphylococcus epidermidis (strain ATCC 12228 / FDA PCI 1200).